Here is a 155-residue protein sequence, read N- to C-terminus: Endoribonuclease YbeY (155 aa).

Positions 116, 120, and 126 each coordinate Zn(2+).

This sequence belongs to the endoribonuclease YbeY family. It depends on Zn(2+) as a cofactor.

Its subcellular location is the cytoplasm. Its function is as follows. Single strand-specific metallo-endoribonuclease involved in late-stage 70S ribosome quality control and in maturation of the 3' terminus of the 16S rRNA. The polypeptide is Endoribonuclease YbeY (Thermobifida fusca (strain YX)).